Consider the following 329-residue polypeptide: Sex comb on midleg-like protein 1 (329 aa).

Phosphoserine occurs at positions 138 and 238. The tract at residues serine 138–proline 157 is disordered. In terms of domain architecture, SAM spans tryptophan 258 to lysine 325.

It belongs to the SCM family. Ubiquitous. Expressed in fetal and adult tissues.

It is found in the nucleus. In terms of biological role, putative Polycomb group (PcG) protein. PcG proteins act by forming multiprotein complexes, which are required to maintain the transcriptionally repressive state of homeotic genes throughout development. May be involved in spermatogenesis during sexual maturation. The protein is Sex comb on midleg-like protein 1 (SCML1) of Homo sapiens (Human).